The primary structure comprises 351 residues: Peroxisomal membrane protein PEX14 (351 aa).

The interval 54-75 (KARTGTVQASPSQQSVVPPRPP) is disordered. Residues 60–70 (VQASPSQQSVV) show a composition bias toward low complexity. The SH3-binding motif lies at 83 to 91 (APPLPERDW). The interval 243 to 351 (APQLSTPPSE…RGIPAWQLNA (109 aa)) is disordered. Positions 245–258 (QLSTPPSESTSRQS) are enriched in polar residues. Residues 283–293 (VLSREKDKDVN) show a composition bias toward basic and acidic residues. A compositionally biased stretch (polar residues) spans 294–303 (SDSIAQYEQR). The span at 320–334 (SASNGGSSTTSGVAG) shows a compositional bias: low complexity.

This sequence belongs to the peroxin-14 family. Interacts with PEX13 (via SH3 domain); forming the PEX13-PEX14 docking complex. Interacts with PEX5 (via WxxxF/Y motifs).

Its subcellular location is the peroxisome membrane. In terms of biological role, component of the PEX13-PEX14 docking complex, a translocon channel that specifically mediates the import of peroxisomal cargo proteins bound to PEX5 receptor. The PEX13-PEX14 docking complex forms a large import pore which can be opened to a diameter of about 9 nm. Mechanistically, PEX5 receptor along with cargo proteins associates with the PEX14 subunit of the PEX13-PEX14 docking complex in the cytosol, leading to the insertion of the receptor into the organelle membrane with the concomitant translocation of the cargo into the peroxisome matrix. The chain is Peroxisomal membrane protein PEX14 from Pichia angusta (Yeast).